The chain runs to 102 residues: Small ribosomal subunit protein eS24 (102 aa).

It belongs to the eukaryotic ribosomal protein eS24 family.

The polypeptide is Small ribosomal subunit protein eS24 (Halorubrum lacusprofundi (strain ATCC 49239 / DSM 5036 / JCM 8891 / ACAM 34)).